The following is a 322-amino-acid chain: Lipoyl synthase (322 aa).

Over residues M1–T14 the composition is skewed to polar residues. The segment at M1–V30 is disordered. Residues P15 to S26 show a composition bias toward basic and acidic residues. Residues C70, C75, C81, C96, C100, C103, and S310 each contribute to the [4Fe-4S] cluster site. Residues F82 to A299 enclose the Radical SAM core domain.

The protein belongs to the radical SAM superfamily. Lipoyl synthase family. It depends on [4Fe-4S] cluster as a cofactor.

Its subcellular location is the cytoplasm. The catalysed reaction is [[Fe-S] cluster scaffold protein carrying a second [4Fe-4S](2+) cluster] + N(6)-octanoyl-L-lysyl-[protein] + 2 oxidized [2Fe-2S]-[ferredoxin] + 2 S-adenosyl-L-methionine + 4 H(+) = [[Fe-S] cluster scaffold protein] + N(6)-[(R)-dihydrolipoyl]-L-lysyl-[protein] + 4 Fe(3+) + 2 hydrogen sulfide + 2 5'-deoxyadenosine + 2 L-methionine + 2 reduced [2Fe-2S]-[ferredoxin]. Its pathway is protein modification; protein lipoylation via endogenous pathway; protein N(6)-(lipoyl)lysine from octanoyl-[acyl-carrier-protein]: step 2/2. Its function is as follows. Catalyzes the radical-mediated insertion of two sulfur atoms into the C-6 and C-8 positions of the octanoyl moiety bound to the lipoyl domains of lipoate-dependent enzymes, thereby converting the octanoylated domains into lipoylated derivatives. The sequence is that of Lipoyl synthase from Methylococcus capsulatus (strain ATCC 33009 / NCIMB 11132 / Bath).